We begin with the raw amino-acid sequence, 132 residues long: NADH-quinone oxidoreductase subunit I 1 (132 aa).

2 4Fe-4S ferredoxin-type domains span residues 42 to 71 (LKVSHDKAKCVACYLCPTVCPAKCITVEAG) and 81 to 110 (ERYEIDMLRCIFCGYCVEACPVDALKMTGQ). 8 residues coordinate [4Fe-4S] cluster: cysteine 51, cysteine 54, cysteine 57, cysteine 61, cysteine 90, cysteine 93, cysteine 96, and cysteine 100.

The protein belongs to the complex I 23 kDa subunit family. NDH-1 is composed of 14 different subunits. Subunits NuoA, H, J, K, L, M, N constitute the membrane sector of the complex. Requires [4Fe-4S] cluster as cofactor.

Its subcellular location is the cell inner membrane. It carries out the reaction a quinone + NADH + 5 H(+)(in) = a quinol + NAD(+) + 4 H(+)(out). Functionally, NDH-1 shuttles electrons from NADH, via FMN and iron-sulfur (Fe-S) centers, to quinones in the respiratory chain. The immediate electron acceptor for the enzyme in this species is believed to be ubiquinone. Couples the redox reaction to proton translocation (for every two electrons transferred, four hydrogen ions are translocated across the cytoplasmic membrane), and thus conserves the redox energy in a proton gradient. This chain is NADH-quinone oxidoreductase subunit I 1, found in Geobacter sulfurreducens (strain ATCC 51573 / DSM 12127 / PCA).